The primary structure comprises 367 residues: Glutamate 5-kinase (367 aa).

Lysine 17 provides a ligand contact to ATP. The substrate site is built by serine 57, aspartate 144, and asparagine 156. ATP-binding positions include 176 to 177 and 217 to 223; these read SD and TGGMTSK. The region spanning 279–357 is the PUA domain; the sequence is AGALTLDEGA…SELPGELRRP (79 aa).

The protein belongs to the glutamate 5-kinase family.

The protein localises to the cytoplasm. The enzyme catalyses L-glutamate + ATP = L-glutamyl 5-phosphate + ADP. It functions in the pathway amino-acid biosynthesis; L-proline biosynthesis; L-glutamate 5-semialdehyde from L-glutamate: step 1/2. In terms of biological role, catalyzes the transfer of a phosphate group to glutamate to form L-glutamate 5-phosphate. In Mycobacterium avium (strain 104), this protein is Glutamate 5-kinase.